The chain runs to 349 residues: Protein BCCIP homolog (349 aa).

Positions 1 to 10 (MGRVFKKKGG) are enriched in basic residues. The disordered stretch occupies residues 1 to 65 (MGRVFKKKGG…DDEEEDEDEQ (65 aa)). Basic and acidic residues predominate over residues 11–33 (AKREAEEEKQEELVMRKKLRKEE). The segment covering 34–65 (EPEPVEDVEEDEDVSDEDDEDIDDEEEDEDEQ) has biased composition (acidic residues).

The protein belongs to the BCP1 family.

This Caenorhabditis elegans protein is Protein BCCIP homolog.